A 255-amino-acid chain; its full sequence is MATIKEIKTQLLSVYTLDDPLLVELSEDPRTGVQRLIKHKQKEINQLRLKEEAFQARFTLERELWSNGIDLVAGIDEVGRGCLAGPVVTASVVLDETFDLIDVNDSKQLSSELREELYAKILTEAVSVGIGVCSNQKIDEVNILNATKLAMREAVGNLNVTPQHLLIDAVNAPIEIPKTVMFKGDSKSISIAAASIVAKVYRDHLMRSYAALYPGYGFDKNVGYGTKQHIEGLKTYGVTPIHRQTFEPVPEFLIK.

One can recognise an RNase H type-2 domain in the interval Asp-70–Lys-255. A divalent metal cation-binding residues include Asp-76, Glu-77, and Asp-168.

Belongs to the RNase HII family. Requires Mn(2+) as cofactor. It depends on Mg(2+) as a cofactor.

It is found in the cytoplasm. It catalyses the reaction Endonucleolytic cleavage to 5'-phosphomonoester.. In terms of biological role, endonuclease that specifically degrades the RNA of RNA-DNA hybrids. The polypeptide is Ribonuclease HII (Pediococcus pentosaceus (strain ATCC 25745 / CCUG 21536 / LMG 10740 / 183-1w)).